Reading from the N-terminus, the 632-residue chain is tRNA uridine 5-carboxymethylaminomethyl modification enzyme MnmG (632 aa).

Position 14–19 (14–19) interacts with FAD; that stretch reads GAGHAG. 273–287 is a binding site for NAD(+); the sequence is GPRYCPSFEDKIMRF.

It belongs to the MnmG family. As to quaternary structure, homodimer. Heterotetramer of two MnmE and two MnmG subunits. FAD serves as cofactor.

It localises to the cytoplasm. NAD-binding protein involved in the addition of a carboxymethylaminomethyl (cmnm) group at the wobble position (U34) of certain tRNAs, forming tRNA-cmnm(5)s(2)U34. The sequence is that of tRNA uridine 5-carboxymethylaminomethyl modification enzyme MnmG from Clostridium novyi (strain NT).